We begin with the raw amino-acid sequence, 561 residues long: Malto-oligosyltrehalose trehalohydrolase (561 aa).

Arg253–His258 is a binding site for substrate. Asp255 functions as the Nucleophile in the catalytic mechanism. The active-site Proton donor is the Glu286. Residues Asp311 to His315 and His379 to Asn384 each bind substrate.

It belongs to the glycosyl hydrolase 13 family. Homodimer.

It is found in the cytoplasm. It carries out the reaction hydrolysis of (1-&gt;4)-alpha-D-glucosidic linkage in 4-alpha-D-[(1-&gt;4)-alpha-D-glucanosyl]n trehalose to yield trehalose and (1-&gt;4)-alpha-D-glucan.. The protein operates within glycan biosynthesis; trehalose biosynthesis. This chain is Malto-oligosyltrehalose trehalohydrolase (treZ), found in Saccharolobus solfataricus (strain ATCC 35092 / DSM 1617 / JCM 11322 / P2) (Sulfolobus solfataricus).